Reading from the N-terminus, the 477-residue chain is Bifunctional protein HldE (477 aa).

The segment at 1–318 (MKVTLPEFER…ENAVRGRADT (318 aa)) is ribokinase. N6-acetyllysine is present on K179. 195-198 (NLSE) serves as a coordination point for ATP. The active site involves D264. The segment at 344-477 (MTNGVFDILH…IKKIQLDKKG (134 aa)) is cytidylyltransferase.

It in the N-terminal section; belongs to the carbohydrate kinase PfkB family. In the C-terminal section; belongs to the cytidylyltransferase family. As to quaternary structure, homodimer.

It carries out the reaction D-glycero-beta-D-manno-heptose 7-phosphate + ATP = D-glycero-beta-D-manno-heptose 1,7-bisphosphate + ADP + H(+). The enzyme catalyses D-glycero-beta-D-manno-heptose 1-phosphate + ATP + H(+) = ADP-D-glycero-beta-D-manno-heptose + diphosphate. It participates in nucleotide-sugar biosynthesis; ADP-L-glycero-beta-D-manno-heptose biosynthesis; ADP-L-glycero-beta-D-manno-heptose from D-glycero-beta-D-manno-heptose 7-phosphate: step 1/4. The protein operates within nucleotide-sugar biosynthesis; ADP-L-glycero-beta-D-manno-heptose biosynthesis; ADP-L-glycero-beta-D-manno-heptose from D-glycero-beta-D-manno-heptose 7-phosphate: step 3/4. Catalyzes the phosphorylation of D-glycero-D-manno-heptose 7-phosphate at the C-1 position to selectively form D-glycero-beta-D-manno-heptose-1,7-bisphosphate. Functionally, catalyzes the ADP transfer from ATP to D-glycero-beta-D-manno-heptose 1-phosphate, yielding ADP-D-glycero-beta-D-manno-heptose. In Escherichia coli O81 (strain ED1a), this protein is Bifunctional protein HldE.